Here is a 257-residue protein sequence, read N- to C-terminus: UPF0246 protein ECA3888 (257 aa).

This sequence belongs to the UPF0246 family.

The polypeptide is UPF0246 protein ECA3888 (Pectobacterium atrosepticum (strain SCRI 1043 / ATCC BAA-672) (Erwinia carotovora subsp. atroseptica)).